We begin with the raw amino-acid sequence, 193 residues long: Pyridoxal 5'-phosphate synthase subunit PdxT (193 aa).

An L-glutamine-binding site is contributed by 50–52; sequence GES. Catalysis depends on C82, which acts as the Nucleophile. L-glutamine is bound by residues R109 and 136-137; that span reads IR. Residues H172 and E174 each act as charge relay system in the active site.

It belongs to the glutaminase PdxT/SNO family. As to quaternary structure, in the presence of PdxS, forms a dodecamer of heterodimers. Only shows activity in the heterodimer.

The enzyme catalyses aldehydo-D-ribose 5-phosphate + D-glyceraldehyde 3-phosphate + L-glutamine = pyridoxal 5'-phosphate + L-glutamate + phosphate + 3 H2O + H(+). It carries out the reaction L-glutamine + H2O = L-glutamate + NH4(+). It functions in the pathway cofactor biosynthesis; pyridoxal 5'-phosphate biosynthesis. In terms of biological role, catalyzes the hydrolysis of glutamine to glutamate and ammonia as part of the biosynthesis of pyridoxal 5'-phosphate. The resulting ammonia molecule is channeled to the active site of PdxS. This is Pyridoxal 5'-phosphate synthase subunit PdxT from Streptococcus pneumoniae serotype 19F (strain G54).